The following is a 156-amino-acid chain: RNA polymerase sigma factor SigS (156 aa).

Positions glutamate 29 to isoleucine 44 match the Polymerase core binding motif. The segment at residues glutamine 126 to methionine 145 is a DNA-binding region (H-T-H motif).

It belongs to the sigma-70 factor family.

In terms of biological role, sigma factors are initiation factors that promote the attachment of RNA polymerase to specific initiation sites and are then released. Sigma-S contributes to the protection against external stress, thus playing a role in cellular fitness and survival. This Staphylococcus aureus (strain COL) protein is RNA polymerase sigma factor SigS (sigS).